Consider the following 222-residue polypeptide: Leucyl/phenylalanyl-tRNA--protein transferase (222 aa).

It belongs to the L/F-transferase family.

The protein localises to the cytoplasm. The enzyme catalyses N-terminal L-lysyl-[protein] + L-leucyl-tRNA(Leu) = N-terminal L-leucyl-L-lysyl-[protein] + tRNA(Leu) + H(+). The catalysed reaction is N-terminal L-arginyl-[protein] + L-leucyl-tRNA(Leu) = N-terminal L-leucyl-L-arginyl-[protein] + tRNA(Leu) + H(+). It carries out the reaction L-phenylalanyl-tRNA(Phe) + an N-terminal L-alpha-aminoacyl-[protein] = an N-terminal L-phenylalanyl-L-alpha-aminoacyl-[protein] + tRNA(Phe). In terms of biological role, functions in the N-end rule pathway of protein degradation where it conjugates Leu, Phe and, less efficiently, Met from aminoacyl-tRNAs to the N-termini of proteins containing an N-terminal arginine or lysine. This Legionella pneumophila (strain Lens) protein is Leucyl/phenylalanyl-tRNA--protein transferase.